Here is a 1189-residue protein sequence, read N- to C-terminus: Lysine-specific demethylase hairless (1189 aa).

Disordered stretches follow at residues 1–40 (MEST…HHGP), 236–257 (HLQR…EMGA), 349–377 (EGGA…SHHT), 414–480 (AGSP…LQDP), and 505–552 (GEGG…RLST). The segment covering 239-254 (RAGEAERPSLHQRDGE) has biased composition (basic and acidic residues). The span at 457–469 (KDVDSGQHDEQKG) shows a compositional bias: basic and acidic residues. The LXXLL motif 1 signature appears at 566–570 (LCRLL). The C6-type zinc finger occupies 600-625 (CSRCHHGLFNTHWRCPRCSHRLCVAC). Residues 702-750 (GDAGQQKESTQKTPPTPQPSCNGDTHRTKSIKEETPDSAETPAEDRAGR) are disordered. The segment covering 725 to 736 (DTHRTKSIKEET) has biased composition (basic and acidic residues). The LXXLL motif 2 signature appears at 758–762 (LCELL). Positions 946 to 1157 (DTSRVENLAA…LSAQLCHQGP (212 aa)) constitute a JmjC domain. The Fe cation site is built by C1007, E1009, and H1125.

Fe(2+) serves as cofactor. Strongest expression of isoforms 1 and 2 is seen in the small intestine, weaker expression in brain and colon, and trace expression is found in liver, pancreas, spleen, thymus, stomach, salivary gland, appendix and trachea. Isoform 1 is always the most abundant. Isoform 1 is exclusively expressed at low levels in kidney and testis. Isoform 2 is exclusively expressed at high levels in the skin.

It localises to the nucleus. It carries out the reaction N(6),N(6)-dimethyl-L-lysyl(9)-[histone H3] + 2 2-oxoglutarate + 2 O2 = L-lysyl(9)-[histone H3] + 2 formaldehyde + 2 succinate + 2 CO2. Histone demethylase that specifically demethylates both mono- and dimethylated 'Lys-9' of histone H3. May act as a transcription regulator controlling hair biology (via targeting of collagens), neural activity, and cell cycle. The sequence is that of Lysine-specific demethylase hairless (HR) from Homo sapiens (Human).